We begin with the raw amino-acid sequence, 447 residues long: NADH-quinone oxidoreductase subunit N (447 aa).

A run of 13 helical transmembrane segments spans residues 4-24 (FAAL…MLAA), 27-47 (LPGL…VALA), 68-88 (LTGL…RPDG), 92-112 (EGPA…GAVH), 113-133 (AASL…LFVL), 146-166 (FLIL…LGHA), 181-201 (ALLT…LALV), 215-235 (PGAA…TALV), 245-265 (VWAL…NLAA), 280-300 (VGHA…APAA), 302-322 (LFYI…AALI), 342-362 (GAAM…AGFF), and 376-395 (AWAL…YYYL).

The protein belongs to the complex I subunit 2 family. NDH-1 is composed of 14 different subunits. Subunits NuoA, H, J, K, L, M, N constitute the membrane sector of the complex.

The protein resides in the cell inner membrane. The catalysed reaction is a quinone + NADH + 5 H(+)(in) = a quinol + NAD(+) + 4 H(+)(out). Functionally, NDH-1 shuttles electrons from NADH, via FMN and iron-sulfur (Fe-S) centers, to quinones in the respiratory chain. The immediate electron acceptor for the enzyme in this species is believed to be ubiquinone. Couples the redox reaction to proton translocation (for every two electrons transferred, four hydrogen ions are translocated across the cytoplasmic membrane), and thus conserves the redox energy in a proton gradient. The chain is NADH-quinone oxidoreductase subunit N from Cereibacter sphaeroides (strain ATCC 17025 / ATH 2.4.3) (Rhodobacter sphaeroides).